The sequence spans 89 residues: UPF0297 protein SMU_2079c (89 aa).

It belongs to the UPF0297 family.

This is UPF0297 protein SMU_2079c from Streptococcus mutans serotype c (strain ATCC 700610 / UA159).